The sequence spans 320 residues: Methylenetetrahydrofolate dehydrogenase [NAD(+)] (320 aa).

Residue C152 is part of the active site. NAD(+) is bound by residues 187–188 (RS) and 210–211 (DI).

The protein belongs to the tetrahydrofolate dehydrogenase/cyclohydrolase family. As to quaternary structure, homodimer.

It is found in the cytoplasm. Its subcellular location is the nucleus. It carries out the reaction (6R)-5,10-methylene-5,6,7,8-tetrahydrofolate + NAD(+) = (6R)-5,10-methenyltetrahydrofolate + NADH. It participates in one-carbon metabolism; tetrahydrofolate interconversion. Functionally, catalyzes oxidation of cytoplasmic one-carbon units for purine biosynthesis. This Schizosaccharomyces pombe (strain 972 / ATCC 24843) (Fission yeast) protein is Methylenetetrahydrofolate dehydrogenase [NAD(+)] (mtd1).